A 375-amino-acid chain; its full sequence is 23S rRNA (uracil(747)-C(5))-methyltransferase RlmC (375 aa).

[4Fe-4S] cluster contacts are provided by Cys3, Cys11, Cys14, and Cys87. Residues Gln212, Phe241, Glu262, and Asn307 each coordinate S-adenosyl-L-methionine. Catalysis depends on Cys334, which acts as the Nucleophile.

It belongs to the class I-like SAM-binding methyltransferase superfamily. RNA M5U methyltransferase family. RlmC subfamily.

The enzyme catalyses uridine(747) in 23S rRNA + S-adenosyl-L-methionine = 5-methyluridine(747) in 23S rRNA + S-adenosyl-L-homocysteine + H(+). Functionally, catalyzes the formation of 5-methyl-uridine at position 747 (m5U747) in 23S rRNA. The protein is 23S rRNA (uracil(747)-C(5))-methyltransferase RlmC of Escherichia coli O139:H28 (strain E24377A / ETEC).